A 239-amino-acid polypeptide reads, in one-letter code: tRNA (guanine-N(7)-)-methyltransferase (239 aa).

The S-adenosyl-L-methionine site is built by Glu-69, Glu-94, Asp-121, and Asp-144. Asp-144 is an active-site residue. Lys-148 contributes to the substrate binding site. Residues 150–155 (RHNKRR) are interaction with RNA. Substrate contacts are provided by residues Asp-180 and 217 to 220 (TKFE).

The protein belongs to the class I-like SAM-binding methyltransferase superfamily. TrmB family. Monomer.

It carries out the reaction guanosine(46) in tRNA + S-adenosyl-L-methionine = N(7)-methylguanosine(46) in tRNA + S-adenosyl-L-homocysteine. The protein operates within tRNA modification; N(7)-methylguanine-tRNA biosynthesis. Functionally, catalyzes the formation of N(7)-methylguanine at position 46 (m7G46) in tRNA. This Salmonella typhimurium (strain LT2 / SGSC1412 / ATCC 700720) protein is tRNA (guanine-N(7)-)-methyltransferase.